The following is a 540-amino-acid chain: MAHDPGRVLIFDTTLRDGEQSPGASLNLEEKLAIAQQLARLGVDVIEAGFPFASPGDFNAVQRIAQQVGGEQGPIICGLARASRGDIKACADAVAPAPRRRIHTFIATSDIHLEHKLRKSRQEVLAIVPEMVAYARSLVDDVEFSCEDAGRSDPEFLYAVIEAAINAGASTINIPDTVGYTTPAEFGALIAGIDQHVPNISEAVLSVHGHNDLGLAVANFLEAVKNGARQLECTINGIGERAGNAALEELVMALHVRRRYFNPFFGRAEDSPTPLTGVRTEEITKTSRLVSNLTGMVVQPNKAIVGANAFAHESGIHQDGVLKNRLTYEIVDARTVGLTDNRISLGKLSGRSAVRARLEELGYDLSREDLDDAFARFKELADRKRDITDRDLEAIVSEQVQQPDARYQLKLVQVSCGSSLQPTATVTLLDEEGQEQSEAAIGTGPVDAVCRALNALAGEPNELVEFSVKSVTEGIDAMGEVTIRLRRDGQLFSGHAADTDVVVAAAQAFVNALNRLVAGSLNPTLHPQRDATPLDASPTL.

In terms of domain architecture, Pyruvate carboxyltransferase spans 8–269 (VLIFDTTLRD…YFNPFFGRAE (262 aa)). Mn(2+) is bound by residues Asp-17, His-208, His-210, and Asn-244. The tract at residues 408–540 (QLKLVQVSCG…ATPLDASPTL (133 aa)) is regulatory domain.

This sequence belongs to the alpha-IPM synthase/homocitrate synthase family. LeuA type 1 subfamily. Homodimer. Mn(2+) serves as cofactor.

It localises to the cytoplasm. The enzyme catalyses 3-methyl-2-oxobutanoate + acetyl-CoA + H2O = (2S)-2-isopropylmalate + CoA + H(+). The protein operates within amino-acid biosynthesis; L-leucine biosynthesis; L-leucine from 3-methyl-2-oxobutanoate: step 1/4. Its function is as follows. Catalyzes the condensation of the acetyl group of acetyl-CoA with 3-methyl-2-oxobutanoate (2-ketoisovalerate) to form 3-carboxy-3-hydroxy-4-methylpentanoate (2-isopropylmalate). The polypeptide is 2-isopropylmalate synthase (Synechococcus sp. (strain WH7803)).